A 535-amino-acid polypeptide reads, in one-letter code: Ribonuclease Y (535 aa).

A helical transmembrane segment spans residues 4 to 24; the sequence is IILLIVSALIGLILGYALISI. The tract at residues 118–141 is disordered; that stretch reads ENLSSKEKVLDSKEQSLTDKSKHI. The KH domain maps to 225-285; sequence TITSVHLPDD…IRREIARMTL (61 aa). One can recognise an HD domain in the interval 351 to 444; the sequence is VLRHSVEVGK…VAAADALSSA (94 aa).

This sequence belongs to the RNase Y family.

Its subcellular location is the cell membrane. In terms of biological role, endoribonuclease that initiates mRNA decay. The chain is Ribonuclease Y from Streptococcus pyogenes serotype M1.